The following is a 699-amino-acid chain: Ribosomal RNA large subunit methyltransferase K/L (699 aa).

The THUMP domain maps to D44–L155.

Belongs to the methyltransferase superfamily. RlmKL family.

The protein resides in the cytoplasm. The catalysed reaction is guanosine(2445) in 23S rRNA + S-adenosyl-L-methionine = N(2)-methylguanosine(2445) in 23S rRNA + S-adenosyl-L-homocysteine + H(+). It carries out the reaction guanosine(2069) in 23S rRNA + S-adenosyl-L-methionine = N(2)-methylguanosine(2069) in 23S rRNA + S-adenosyl-L-homocysteine + H(+). Its function is as follows. Specifically methylates the guanine in position 2445 (m2G2445) and the guanine in position 2069 (m7G2069) of 23S rRNA. This chain is Ribosomal RNA large subunit methyltransferase K/L, found in Alteromonas mediterranea (strain DSM 17117 / CIP 110805 / LMG 28347 / Deep ecotype).